The following is a 79-amino-acid chain: Scutelatoxin (79 aa).

An N-terminal signal peptide occupies residues Met1–Thr21. 4 cysteine pairs are disulfide-bonded: Cys24–Cys41, Cys34–Cys59, Cys63–Cys71, and Cys72–Cys77.

This sequence belongs to the three-finger toxin family. Short-chain subfamily. As to expression, expressed by the venom gland.

The protein resides in the secreted. This is Scutelatoxin from Oxyuranus scutellatus scutellatus (Australian taipan).